The sequence spans 271 residues: Aminoglycoside 3'-phosphotransferase (271 aa).

Asp-198 acts as the Proton acceptor in catalysis.

Belongs to the aminoglycoside phosphotransferase family.

The catalysed reaction is kanamycin A + ATP = kanamycin 3'-phosphate + ADP + H(+). In terms of biological role, resistance to kanamycin and structurally-related aminoglycosides, including amikacin. The chain is Aminoglycoside 3'-phosphotransferase from Salmonella typhimurium.